A 1172-amino-acid polypeptide reads, in one-letter code: DNA-directed RNA polymerase subunit beta (1172 aa).

It belongs to the RNA polymerase beta chain family. As to quaternary structure, the RNAP catalytic core consists of 2 alpha, 1 beta, 1 beta' and 1 omega subunit. When a sigma factor is associated with the core the holoenzyme is formed, which can initiate transcription.

The catalysed reaction is RNA(n) + a ribonucleoside 5'-triphosphate = RNA(n+1) + diphosphate. Functionally, DNA-dependent RNA polymerase catalyzes the transcription of DNA into RNA using the four ribonucleoside triphosphates as substrates. In Mycobacterium sp. (strain JLS), this protein is DNA-directed RNA polymerase subunit beta.